Consider the following 381-residue polypeptide: Alcohol dehydrogenase class-3 (381 aa).

C49 lines the Zn(2+) pocket. H50 is a binding site for NAD(+). The an alcohol site is built by T51 and H71. Positions 71, 72, 101, 104, 107, 115, and 179 each coordinate Zn(2+). Residues 204–209 (GLGTVG), D228, K233, I274, 297–299 (VGV), 322–324 (TAF), and R374 each bind NAD(+).

This sequence belongs to the zinc-containing alcohol dehydrogenase family. Class-III subfamily. Homodimer. Zn(2+) is required as a cofactor. As to expression, expressed at low levels in the leaves.

It is found in the cytoplasm. It catalyses the reaction a primary alcohol + NAD(+) = an aldehyde + NADH + H(+). The enzyme catalyses a secondary alcohol + NAD(+) = a ketone + NADH + H(+). The catalysed reaction is S-(hydroxymethyl)glutathione + NADP(+) = S-formylglutathione + NADPH + H(+). It carries out the reaction S-(hydroxymethyl)glutathione + NAD(+) = S-formylglutathione + NADH + H(+). The protein is Alcohol dehydrogenase class-3 (FDH) of Zea mays (Maize).